A 214-amino-acid polypeptide reads, in one-letter code: DELTA-actitoxin-Aeq1a (214 aa).

Positions 1 to 19 (MSRLIIVFIVVTMICSATA) are cleaved as a signal peptide. The propeptide occupies 20–35 (LPSKKIIDEDEEDEKR). The segment at 38–47 (DVAGAVIDGA) is plays an important role in the hemolytic activity. The N-terminal region stretch occupies residues 46-65 (GASLSFDILKTVLEALGNVK). 7 residues coordinate phosphocholine: S89, V122, S140, P142, Y168, Y172, and Y173. The segment at 140-155 (SVPYDYNWYSNWWNVR) is trp-rich region, which is important for the binding to lipid membrane. The short motif at 179 to 181 (RGD) is the Cell attachment site, crucial for protein stability element.

Belongs to the actinoporin family. Sea anemone subfamily. As to quaternary structure, octamer or nonamer in membranes. Monomer in the soluble state.

The protein localises to the secreted. Its subcellular location is the nematocyst. It is found in the target cell membrane. In terms of biological role, pore-forming protein that forms cations-selective hydrophilic pores of around 1 nm and causes cardiac stimulation and cytolysis. Pore formation is a multi-step process that involves specific recognition of membrane sphingomyelin (but neither cholesterol nor phosphatidylcholine) using aromatic rich region and adjacent phosphocholine (POC) binding site, firm binding to the membrane (mainly driven by hydrophobic interactions) accompanied by the transfer of the N-terminal region to the lipid-water interface and finally pore formation after oligomerization of monomers. Cytolytic effects include red blood cells hemolysis, platelet aggregation and lysis, cytotoxic and cytostatic effects on fibroblasts. Lethality in mammals has been ascribed to severe vasospasm of coronary vessels, cardiac arrhythmia, and inotropic effects. The sequence is that of DELTA-actitoxin-Aeq1a from Actinia equina (Beadlet anemone).